Consider the following 777-residue polypeptide: Semaphorin-4F (777 aa).

Residues 1–40 (MLARAERPRPGPRPPPVSLFPPPSSLLLLLLAMLSAPVCG) form the signal peptide. The Extracellular portion of the chain corresponds to 41-667 (RVPRSVPRTS…PANRAHTVVG (627 aa)). The 469-residue stretch at 48–516 (RTSLPISEAD…SHTEVTQVNT (469 aa)) folds into the Sema domain. Asn70 is a glycosylation site (N-linked (GlcNAc...) asparagine). An intrachain disulfide couples Cys118 to Cys128. A glycan (N-linked (GlcNAc...) asparagine) is linked at Asn139. Intrachain disulfides connect Cys146/Cys155, Cys279/Cys390, and Cys303/Cys349. N-linked (GlcNAc...) asparagine glycosylation occurs at Asn515. A PSI domain is found at 518–569 (NCGRLQSCSECILAQDPVCAWSFRLDACVAHAGEHRGMVQDIESADVSSLCP). 3 disulfides stabilise this stretch: Cys519–Cys536, Cys528–Cys545, and Cys593–Cys634. Positions 586–641 (VGHVVLPCSPSSAWASCVWHQPSGVTSLTPRRDGLEVVVTPGAMGAYACECQEGGA) constitute an Ig-like C2-type domain. Residues 668–688 (AGLVGFFLGVLAASLTLLLIG) form a helical membrane-spanning segment. Over 689–777 (RRQQRRRQRE…PLATCDETSI (89 aa)) the chain is Cytoplasmic. A disordered region spans residues 703–742 (DKVGLDLGAPPSGTTSYSQDPPSPSPEDERLPLALGKRGS). Residues Ser725 and Ser727 each carry the phosphoserine modification. A PDZ-binding motif is present at residues 775–777 (TSI).

It belongs to the semaphorin family. As to quaternary structure, interacts (via PDZ-binding motif) with DLG4/SAP90 (via PDZ domain 2); this interaction may promote translocation of DLG4/SAP90 to the membrane. As to expression, expressed throughout the adult brain, where it shows particularly strong expression in the hippocampus, corpus callosum, granular layer and deep nuclei of the cerebellum, and the mitral layer of the olfactory bulb (at protein level). At the cellular level, detected in neuronal precursors, postmitotic neurons, pyramidal neurons, and glial cells including mature oligodendocytes and oligodendroglial precursor cells (at protein level).

It localises to the cell membrane. Its subcellular location is the postsynaptic density. The protein localises to the perikaryon. The protein resides in the cell projection. It is found in the dendrite. Functionally, probable cell surface receptor that regulates oligodendroglial precursor cell migration. Might also regulate differentiation of oligodendroglial precursor cells. Has growth cone collapse activity against retinal ganglion-cell axons. This is Semaphorin-4F (Sema4f) from Mus musculus (Mouse).